A 142-amino-acid chain; its full sequence is Biogenesis of lysosome-related organelles complex 1 subunit 2 (142 aa).

The segment at 1 to 33 is disordered; that stretch reads MAAAAEGVLATRSDEPARDDAAVETAEEAKEPA. Ala2 is subject to N-acetylalanine. The segment covering 12 to 33 has biased composition (basic and acidic residues); it reads RSDEPARDDAAVETAEEAKEPA. A coiled-coil region spans residues 79-127; that stretch reads EMKDIAINISRNLKDLNQKYAGLQPYLDQINVIEEQVAALEQAAYKLDA.

Belongs to the BLOC1S2 family. In terms of assembly, component of the biogenesis of lysosome-related organelles complex 1 (BLOC-1) composed of BLOC1S1, BLOC1S2, BLOC1S3, BLOC1S4, BLOC1S5, BLOC1S6, DTNBP1/BLOC1S7 and SNAPIN/BLOC1S8. Octamer composed of one copy each BLOC1S1, BLOC1S2, BLOC1S3, BLOC1S4, BLOC1S5, BLOC1S6, DTNBP1/BLOC1S7 and SNAPIN/BLOC1S8. Interacts directly with BLOC1S1, BLOC1S3, BLOC1S4, BLOC1S5 and SNAPIN. The BLOC-1 complex associates with the AP-3 protein complex and membrane protein cargos. Component of the BLOC-one-related complex (BORC) which is composed of BLOC1S1, BLOC1S2, BORCS5, BORCS6, BORCS7, BORCS8, KXD1 and SNAPIN. Interacts with gamma-tubulin. Interacts with IFT57. As to expression, isoform 1 and isoform 2 are widely expressed. Expressed in various malignant tumor tissues (at protein level).

It is found in the cytoplasm. The protein resides in the cytoskeleton. The protein localises to the microtubule organizing center. Its subcellular location is the centrosome. It localises to the lysosome membrane. Component of the BLOC-1 complex, a complex that is required for normal biogenesis of lysosome-related organelles (LRO), such as platelet dense granules and melanosomes. In concert with the AP-3 complex, the BLOC-1 complex is required to target membrane protein cargos into vesicles assembled at cell bodies for delivery into neurites and nerve terminals. The BLOC-1 complex, in association with SNARE proteins, is also proposed to be involved in neurite extension. As part of the BORC complex may play a role in lysosomes movement and localization at the cell periphery. Associated with the cytosolic face of lysosomes, the BORC complex may recruit ARL8B and couple lysosomes to microtubule plus-end-directed kinesin motor. May play a role in cell proliferation. This is Biogenesis of lysosome-related organelles complex 1 subunit 2 (BLOC1S2) from Homo sapiens (Human).